We begin with the raw amino-acid sequence, 319 residues long: 4-diphosphocytidyl-2-C-methyl-D-erythritol kinase (319 aa).

Lys21 is a catalytic residue. 106 to 116 (PIGAGLAGGSS) is an ATP binding site. Asp148 is a catalytic residue.

It belongs to the GHMP kinase family. IspE subfamily.

The enzyme catalyses 4-CDP-2-C-methyl-D-erythritol + ATP = 4-CDP-2-C-methyl-D-erythritol 2-phosphate + ADP + H(+). It participates in isoprenoid biosynthesis; isopentenyl diphosphate biosynthesis via DXP pathway; isopentenyl diphosphate from 1-deoxy-D-xylulose 5-phosphate: step 3/6. Functionally, catalyzes the phosphorylation of the position 2 hydroxy group of 4-diphosphocytidyl-2C-methyl-D-erythritol. This is 4-diphosphocytidyl-2-C-methyl-D-erythritol kinase from Prochlorococcus marinus (strain MIT 9313).